We begin with the raw amino-acid sequence, 479 residues long: Serine protease HTRA1A (479 aa).

An N-terminal signal peptide occupies residues 1 to 18 (MILVTLFCICALVTSLQA). In terms of domain architecture, IGFBP N-terminal spans 27 to 111 (VIGGCPSHCD…RGKQGVCVCK (85 aa)). Intrachain disulfides connect Cys31–Cys56, Cys35–Cys58, Cys40–Cys59, Cys47–Cys62, Cys70–Cys87, and Cys81–Cys108. The 60-residue stretch at 96-155 (SATVRRRGKQGVCVCKSSDPVCGSDGVSYRDICELKRVSNRAQSLQQPPVLFIQRGACGT) folds into the Kazal-like domain. Residues 203–363 (GSGFVVSDDG…IPSDKIRQFL (161 aa)) form a serine protease region. Catalysis depends on charge relay system residues His219, Asp249, and Ser327. The 103-residue stretch at 364–466 (AESYDRLARG…LRVVVRRGNE (103 aa)) folds into the PDZ domain.

The protein belongs to the peptidase S1C family. Forms homotrimers. In the presence of substrate, may form higher-order multimers in a PDZ-independent manner.

The protein localises to the secreted. Its subcellular location is the cytoplasm. The protein resides in the cytosol. Its function is as follows. Serine protease with a variety of targets, including extracellular matrix proteins and proteoglycans. Through cleavage of proteoglycans, may release soluble FGF-glycosaminoglycan complexes that promote the range and intensity of FGF signals in the extracellular space. Regulates the availability of insulin-like growth factors (IGFs) by cleaving IGF-binding proteins. Inhibits signaling mediated by TGF-beta family members. Consequently, may regulate many physiological processes. Intracellularly, degrades TSC2, leading to the activation of TSC2 downstream targets. This Danio rerio (Zebrafish) protein is Serine protease HTRA1A (htra1a).